Here is a 343-residue protein sequence, read N- to C-terminus: D-alanine--D-alanine ligase (343 aa).

The ATP-grasp domain occupies 129 to 335 (KYVLEHFNIK…YSKLIDELIE (207 aa)). 162-217 (ENKLGYAVFIKPSNSGSSVGITKAHNRKELEAGLEEAMKYDRKILVEEALNAREIE) contributes to the ATP binding site. 3 residues coordinate Mg(2+): aspartate 288, glutamate 302, and asparagine 304.

It belongs to the D-alanine--D-alanine ligase family. Mg(2+) is required as a cofactor. The cofactor is Mn(2+).

It localises to the cytoplasm. It carries out the reaction 2 D-alanine + ATP = D-alanyl-D-alanine + ADP + phosphate + H(+). The protein operates within cell wall biogenesis; peptidoglycan biosynthesis. Its function is as follows. Cell wall formation. The chain is D-alanine--D-alanine ligase from Clostridium acetobutylicum (strain ATCC 824 / DSM 792 / JCM 1419 / IAM 19013 / LMG 5710 / NBRC 13948 / NRRL B-527 / VKM B-1787 / 2291 / W).